We begin with the raw amino-acid sequence, 705 residues long: FAD-dependent monooxygenase ATEG_03635 (705 aa).

FAD is bound by residues 86 to 115 (DVLICGAGPFGLELGLILARQGISFRIVDK), V208, 308 to 310 (RFY), and S408.

This sequence belongs to the PheA/TfdB FAD monooxygenase family. The cofactor is FAD.

It participates in secondary metabolite biosynthesis. Functionally, FAD-dependent monooxygenase; part of the cluster A that mediates the biosynthesis of azasperpyranones, members of the azaphilone family that exhibit anti-cancer activities. Azasperpyranones are synthesized by 2 clusters, A and B. Cluster A is responsible for the production of the polyhydric phenol moiety while the azaphilonoid scaffold is produced by the cluster B. The non-reducing polyketide synthase ATEG_03629 produces 5-methyl orsellinic acid, which is then reduced to 5-methyl orsellinic aldehyde by the NRPS-like protein ATEG_03630. 5-methyl orsellinic aldehyde is then first hydroxylated by the FAD-dependent monooxygenase ATEG_03635 and subsequently hydroxylated by the cytochrome P450 monooxygenase ATEG_03631 to produce the unstable polyhydric phenol precursor of azasperpyranones. On the other hand, the polyketide synthase ATEG_07659 is responsible for producing the 3,5-dimethyloctadienone moiety from acetyl-CoA, three malonyl-CoA, and two S-adenosyl methionines (SAM). The 3,5-dimethyloctadienone moiety is then loaded onto the SAT domain of ATEG_07661 and extended with four malonyl-CoA and one SAM, which leads to the formation of 2,4-dihydroxy-6-(5,7-dimethyl-2-oxo-trans-3-trans-5-nonadienyl)-3-methylbenzaldehyde (compound 8) after reductive release and aldol condensation. The FAD-dependent monooxygenase ATEG_07662 is the next enzyme in the biosynthesis sequence and hydroxylates the side chain at the benzylic position of compound 8. In Aspergillus nidulans, afoF, the ortholog of the FAD-dependent oxygenase ATEG_07660, is the key enzyme for the biosynthesis of asperfuranone by catalyzing the hydroxylation at C-8 of to prevent the formation of a six-membered ring hemiacetal intermediate and thus facilitating the formation of a five-membered ring to produce asperfuranone. In Aspergillus terreus, ATEG_07660 is probably not functional, which leads to the formation of the six-membered ring hemiacetal intermediate presperpyranone instead of asperfuranone. Finally, ATEG_03636 is involved in the condensation of the polyhydric phenol moiety produced by cluster A and the perasperpyranone precursor produced by cluster B, to yield azasperpyranone A. Further modifications of azasperpyranone A result in the production of derivatives, including azasperpyranone B to F. This is FAD-dependent monooxygenase ATEG_03635 from Aspergillus terreus (strain NIH 2624 / FGSC A1156).